The sequence spans 283 residues: Phosphatidylglycerol--prolipoprotein diacylglyceryl transferase (283 aa).

4 helical membrane-spanning segments follow: residues 20-40, 51-71, 97-117, and 123-143; these read LGPV…FVAM, GGNP…GIIG, ITNG…AVYF, and GVAF…AQAI. Arginine 145 is a binding site for a 1,2-diacyl-sn-glycero-3-phospho-(1'-sn-glycerol). The next 2 helical transmembrane spans lie at 192-212 and 255-275; these read VHPT…VLLW and INVI…FALR.

Belongs to the Lgt family.

It is found in the cell membrane. The catalysed reaction is L-cysteinyl-[prolipoprotein] + a 1,2-diacyl-sn-glycero-3-phospho-(1'-sn-glycerol) = an S-1,2-diacyl-sn-glyceryl-L-cysteinyl-[prolipoprotein] + sn-glycerol 1-phosphate + H(+). The protein operates within protein modification; lipoprotein biosynthesis (diacylglyceryl transfer). Catalyzes the transfer of the diacylglyceryl group from phosphatidylglycerol to the sulfhydryl group of the N-terminal cysteine of a prolipoprotein, the first step in the formation of mature lipoproteins. This chain is Phosphatidylglycerol--prolipoprotein diacylglyceryl transferase, found in Corynebacterium diphtheriae (strain ATCC 700971 / NCTC 13129 / Biotype gravis).